The chain runs to 103 residues: G0/G1 switch protein 2 (103 aa).

Directly interacts with BCL2; this interaction prevents the formation of the anti-apoptotic BAX-BCL2 complex.

It localises to the mitochondrion. Promotes apoptosis by binding to BCL2, hence preventing the formation of protective BCL2-BAX heterodimers. This chain is G0/G1 switch protein 2 (G0s2), found in Rattus norvegicus (Rat).